A 227-amino-acid polypeptide reads, in one-letter code: Ubiquitin domain-containing protein 1 (227 aa).

Residues 1-35 (MGNCVGRQRRERPAAPGHPRKRAGRNEPLKKERLK) form a disordered region. Residues 24 to 35 (GRNEPLKKERLK) show a composition bias toward basic and acidic residues. The 76-residue stretch at 149–224 (FPLKVRLSTG…IQVIINQPPP (76 aa)) folds into the Ubiquitin-like domain.

As to quaternary structure, interacts with UBTD1.

In terms of biological role, may be involved in the regulation of cellular senescence through a positive feedback loop with TP53. Is a TP53 downstream target gene that increases the stability of TP53 protein by promoting the ubiquitination and degradation of MDM2. The polypeptide is Ubiquitin domain-containing protein 1 (Ubtd1) (Rattus norvegicus (Rat)).